The sequence spans 232 residues: Platelet-activating factor acetylhydrolase IB subunit alpha1 (232 aa).

The segment at 1-20 (MSGEGENPASKPTPVQDVQG) is disordered. An N-acetylserine modification is found at Ser2. Ser2 is modified (phosphoserine). Active-site residues include Ser48, Asp193, and His196.

It belongs to the 'GDSL' lipolytic enzyme family. Platelet-activating factor acetylhydrolase IB beta/gamma subunits subfamily. In terms of assembly, forms a catalytic dimer which is either homodimer (alpha1/alpha1 homodimer) or heterodimer with PAFAH1B2 (alpha1/alpha2 heterodimer). Component of the cytosolic (PAF-AH (I)) heterotetrameric enzyme, which is composed of PAFAH1B1 (beta), PAFAH1B2 (alpha2) and PAFAH1B3 (alpha1) subunits. The catalytic activity of the enzyme resides in the alpha1 (PAFAH1B3) and alpha2 (PAFAH1B2) subunits, whereas the beta subunit (PAFAH1B1) has regulatory activity. Trimer formation is not essential for the catalytic activity. Interacts with VLDLR; this interaction may modulate the Reelin pathway. Expressed in brain, spleen, lung, liver, kidney and testis. Not expressed in heart and skeletal muscle. Expressed in fetal brain as heterodimer. Not expressed in adult tissues. Expressed exclusively in granule cells.

The protein resides in the cytoplasm. It catalyses the reaction a 1-O-alkyl-2-acetyl-sn-glycero-3-phosphocholine + H2O = a 1-O-alkyl-sn-glycero-3-phosphocholine + acetate + H(+). It carries out the reaction 1-O-hexadecyl-2-acetyl-sn-glycero-3-phosphocholine + H2O = 1-O-hexadecyl-sn-glycero-3-phosphocholine + acetate + H(+). The catalysed reaction is 1-O-hexadecyl-2-acetyl-sn-glycero-3-phosphate + H2O = 1-O-hexadecyl-sn-glycero-3-phosphate + acetate + H(+). Its activity is regulated as follows. Beta subunit (PAFAH1B1) inhibits the acetylhydrolase activity of the alpha1/alpha1 catalytic homodimer. In terms of biological role, alpha1 catalytic subunit of the cytosolic type I platelet-activating factor (PAF) acetylhydrolase (PAF-AH (I)) heterotetrameric enzyme that catalyzes the hydrolyze of the acetyl group at the sn-2 position of PAF and its analogs and modulates the action of PAF. The activity and substrate specificity of PAF-AH (I) are affected by its subunit composition. Both alpha1/alpha1 homodimer (PAFAH1B3/PAFAH1B3 homodimer) and alpha1/alpha2 heterodimer(PAFAH1B3/PAFAH1B2 heterodimer) hydrolyze 1-O-alkyl-2-acetyl-sn-glycero-3-phosphoric acid (AAGPA) more efficiently than PAF, but they have little hydrolytic activity towards 1-O-alkyl-2-acetyl-sn-glycero-3-phosphorylethanolamine (AAGPE). Plays an important role during the development of brain. This Rattus norvegicus (Rat) protein is Platelet-activating factor acetylhydrolase IB subunit alpha1.